We begin with the raw amino-acid sequence, 118 residues long: Histone H2B.N (118 aa).

It belongs to the histone H2B family. The nucleosome is a histone octamer containing two molecules each of H2A, H2B, H3 and H4 assembled in one H3-H4 heterotetramer and two H2A-H2B heterodimers. The octamer wraps approximately 147 bp of DNA. In terms of tissue distribution, expressed in germline. Predominantly expressed in oocytes.

It localises to the nucleus. The protein localises to the chromosome. Its function is as follows. Core component of nucleosome. Nucleosomes wrap and compact DNA into chromatin, limiting DNA accessibility to the cellular machineries which require DNA as a template. Histones thereby play a central role in transcription regulation, DNA repair, DNA replication and chromosomal stability. DNA accessibility is regulated via a complex set of post-translational modifications of histones, also called histone code, and nucleosome remodeling. The sequence is that of Histone H2B.N from Homo sapiens (Human).